We begin with the raw amino-acid sequence, 528 residues long: Purine-cytosine permease FCY21 (528 aa).

The Cytoplasmic segment spans residues Met-1–Met-90. The residue at position 43 (Ser-43) is a Phosphoserine. A Phosphothreonine modification is found at Thr-46. Residues Trp-91 to Phe-111 form a helical membrane-spanning segment. The Extracellular portion of the chain corresponds to Asp-112–Ser-118. The chain crosses the membrane as a helical span at residues Val-119–Phe-139. Residues Gly-140 to Arg-161 are Cytoplasmic-facing. A helical transmembrane segment spans residues Ile-162–Ser-182. The Extracellular portion of the chain corresponds to Ser-183 to Trp-198. Residues Ala-199 to Ile-219 form a helical membrane-spanning segment. Residues His-220 to Ala-221 lie on the Cytoplasmic side of the membrane. A helical transmembrane segment spans residues Tyr-222 to Ala-242. The Extracellular segment spans residues Arg-243–Gly-260. The helical transmembrane segment at Asn-261 to Ala-281 threads the bilayer. The Cytoplasmic segment spans residues Asp-282–Lys-295. A helical membrane pass occupies residues Ile-296–Ala-316. Over Ala-317–Leu-340 the chain is Extracellular. A helical transmembrane segment spans residues Thr-341–Leu-361. At Ser-362–Val-393 the chain is on the cytoplasmic side. Residues Ile-394–Phe-414 form a helical membrane-spanning segment. Topologically, residues Ser-415–Thr-416 are extracellular. The helical transmembrane segment at Phe-417 to Cys-437 threads the bilayer. At Ser-438 to Arg-460 the chain is on the cytoplasmic side. Residues Leu-461–Gly-481 traverse the membrane as a helical segment. Residues Met-482 to Arg-493 are Extracellular-facing. Residues Leu-494 to Val-514 form a helical membrane-spanning segment. The Cytoplasmic segment spans residues Tyr-515–Arg-528.

This sequence belongs to the purine-cytosine permease (2.A.39) family.

Its subcellular location is the membrane. Probable purine-cytosine permease. The sequence is that of Purine-cytosine permease FCY21 (FCY21) from Saccharomyces cerevisiae (strain ATCC 204508 / S288c) (Baker's yeast).